The sequence spans 523 residues: Cyclic di-GMP binding protein BcsE (523 aa).

The protein belongs to the BcsE family.

Its function is as follows. Required for cellulose biosynthesis. May have protease activity, but BcsA is not targeted. Binds bis-(3'-5') cyclic diguanylic acid (c-di-GMP). The sequence is that of Cyclic di-GMP binding protein BcsE from Salmonella typhimurium (strain LT2 / SGSC1412 / ATCC 700720).